The chain runs to 181 residues: Ribonuclease HII (181 aa).

Residues 1-181 (MICGIDEVGR…SLHRRNFKLI (181 aa)) enclose the RNase H type-2 domain. 3 residues coordinate a divalent metal cation: D6, E7, and D98.

It belongs to the RNase HII family. Mn(2+) serves as cofactor. Mg(2+) is required as a cofactor.

It localises to the cytoplasm. The enzyme catalyses Endonucleolytic cleavage to 5'-phosphomonoester.. Its function is as follows. Endonuclease that specifically degrades the RNA of RNA-DNA hybrids. This is Ribonuclease HII from Borrelia garinii subsp. bavariensis (strain ATCC BAA-2496 / DSM 23469 / PBi) (Borreliella bavariensis).